Consider the following 122-residue polypeptide: Small ribosomal subunit protein uS13 (122 aa).

The disordered stretch occupies residues 92–122; sequence HRNGLPVRGQRTHTNARTRKGKAKPIAGKKK. The span at 101–122 shows a compositional bias: basic residues; that stretch reads QRTHTNARTRKGKAKPIAGKKK.

This sequence belongs to the universal ribosomal protein uS13 family. As to quaternary structure, part of the 30S ribosomal subunit. Forms a loose heterodimer with protein S19. Forms two bridges to the 50S subunit in the 70S ribosome.

Its function is as follows. Located at the top of the head of the 30S subunit, it contacts several helices of the 16S rRNA. In the 70S ribosome it contacts the 23S rRNA (bridge B1a) and protein L5 of the 50S subunit (bridge B1b), connecting the 2 subunits; these bridges are implicated in subunit movement. Contacts the tRNAs in the A and P-sites. This is Small ribosomal subunit protein uS13 from Erythrobacter litoralis (strain HTCC2594).